The primary structure comprises 288 residues: NAD kinase (288 aa).

Aspartate 70 functions as the Proton acceptor in the catalytic mechanism. Residues 70–71 (DG), 144–145 (ND), arginine 155, lysine 172, aspartate 174, 185–190 (TGYSLS), and glutamine 245 contribute to the NAD(+) site.

It belongs to the NAD kinase family. The cofactor is a divalent metal cation.

It is found in the cytoplasm. The catalysed reaction is NAD(+) + ATP = ADP + NADP(+) + H(+). Its function is as follows. Involved in the regulation of the intracellular balance of NAD and NADP, and is a key enzyme in the biosynthesis of NADP. Catalyzes specifically the phosphorylation on 2'-hydroxyl of the adenosine moiety of NAD to yield NADP. The sequence is that of NAD kinase from Citrifermentans bemidjiense (strain ATCC BAA-1014 / DSM 16622 / JCM 12645 / Bem) (Geobacter bemidjiensis).